Consider the following 487-residue polypeptide: Glutamate--tRNA ligase 2 (487 aa).

The 'HIGH' region motif lies at proline 31 to glycine 41. The 'KMSKS' region signature appears at proline 254–arginine 258. Lysine 257 serves as a coordination point for ATP.

Belongs to the class-I aminoacyl-tRNA synthetase family. Glutamate--tRNA ligase type 1 subfamily. In terms of assembly, monomer.

Its subcellular location is the cytoplasm. It carries out the reaction tRNA(Glu) + L-glutamate + ATP = L-glutamyl-tRNA(Glu) + AMP + diphosphate. Its function is as follows. Catalyzes the attachment of glutamate to tRNA(Glu) in a two-step reaction: glutamate is first activated by ATP to form Glu-AMP and then transferred to the acceptor end of tRNA(Glu). The polypeptide is Glutamate--tRNA ligase 2 (Thermotoga maritima (strain ATCC 43589 / DSM 3109 / JCM 10099 / NBRC 100826 / MSB8)).